The sequence spans 247 residues: tRNA pseudouridine synthase A (247 aa).

Residue aspartate 52 is the Nucleophile of the active site. Tyrosine 113 provides a ligand contact to substrate.

Belongs to the tRNA pseudouridine synthase TruA family. As to quaternary structure, homodimer.

The catalysed reaction is uridine(38/39/40) in tRNA = pseudouridine(38/39/40) in tRNA. Functionally, formation of pseudouridine at positions 38, 39 and 40 in the anticodon stem and loop of transfer RNAs. This is tRNA pseudouridine synthase A from Rhizobium meliloti (strain 1021) (Ensifer meliloti).